The following is a 426-amino-acid chain: MKKMKILSFFILSLAIIIGIVYSRQCDDKCKQDYPYSSCNGNLNLYRGLGYDGNGNVIFSGKYNSSQGSGGFGLPSIFSVPSSGGCQLSKRFDIQGEILDGPGYTALDYFYKYLPQLDRYYVRFNQRGSPIFSIYNQTSNEIKAVFNIFNTPFVPAFSQNESAPFFVYGGYGIYGLAKYPTDRSDAQQAKLIYQSQIVNGLEIDGDQLYMTTYQGQFLKGSLNCLNCTKDQLQLLVTDSELASATSVSGFALTSDYMYFSYSGGIKGYPKNGDASRVRKLVSENVVAMISNGDFLYYQTDSGVVKSVSTSGNHPQVNILYTPVSDNQCQCSVGFSGDDCRQCDNGMVLWASDNGIPMCSPLNSLGKPKTCYAAYQCGSSPFIICNGTCTCLPGFSGNDCTLCGNGGEVIWENGYPTCVIQIKKIIT.

Positions 1–23 (MKKMKILSFFILSLAIIIGIVYS) are cleaved as a signal peptide. N-linked (GlcNAc...) asparagine glycans are attached at residues asparagine 64, asparagine 136, asparagine 160, and asparagine 226. 2 consecutive Laminin EGF-like domains span residues 325 to 348 (DNQC…GMVL) and 384 to 408 (CNGT…GGEV). 3 disulfide bridges follow: cysteine 330–cysteine 339, cysteine 342–cysteine 358, and cysteine 370–cysteine 388. A glycan (N-linked (GlcNAc...) asparagine) is linked at asparagine 385.

This Dictyostelium discoideum (Social amoeba) protein is SrfA-induced gene K protein (sigK).